A 215-amino-acid polypeptide reads, in one-letter code: MKPFTQHTGLVCPLDRVNVDTDQIIPKQFLKSIKRTGFGPNLFDEWRYLDAGQPGQDNSKRPINSDFVLNLPRYRGASVLLARDNFGCGSSREHAAWALDEYGFRTVIAPSFADIFFNNSFKNGLLPLVLNKVEVDALFAQCQVTEGYTLTVDLAAQQVITPDGTTYAFQIDTFRKHCLLNGLDDIGLTLQYAEAIRAFEATHRIRQPWLFAPLR.

The protein belongs to the LeuD family. LeuD type 1 subfamily. Heterodimer of LeuC and LeuD.

The catalysed reaction is (2R,3S)-3-isopropylmalate = (2S)-2-isopropylmalate. It participates in amino-acid biosynthesis; L-leucine biosynthesis; L-leucine from 3-methyl-2-oxobutanoate: step 2/4. Functionally, catalyzes the isomerization between 2-isopropylmalate and 3-isopropylmalate, via the formation of 2-isopropylmaleate. The polypeptide is 3-isopropylmalate dehydratase small subunit (Xylella fastidiosa (strain M12)).